Here is a 41-residue protein sequence, read N- to C-terminus: Photosystem II reaction center protein Y (41 aa).

Residues V7–I25 form a helical membrane-spanning segment.

It belongs to the PsbY family. In terms of assembly, PSII is composed of 1 copy each of membrane proteins PsbA, PsbB, PsbC, PsbD, PsbE, PsbF, PsbH, PsbI, PsbJ, PsbK, PsbL, PsbM, PsbT, PsbX, PsbY, PsbZ, Psb30/Ycf12, peripheral proteins PsbO, CyanoQ (PsbQ), PsbU, PsbV and a large number of cofactors. It forms dimeric complexes.

Its subcellular location is the cellular thylakoid membrane. Loosely associated component of the core of photosystem II (PSII), it is not always seen in crystals. PSII is a light-driven water plastoquinone oxidoreductase, using light energy to abstract electrons from H(2)O, generating a proton gradient subsequently used for ATP formation. This chain is Photosystem II reaction center protein Y, found in Nostoc sp. (strain PCC 7120 / SAG 25.82 / UTEX 2576).